The sequence spans 329 residues: Probable ABC transporter permease protein MG188 homolog (329 aa).

The next 6 helical transmembrane spans lie at 30–50 (FLLF…PFFL), 96–116 (IISL…IVFV), 128–148 (VFFL…IYIL), 176–196 (ALWG…VLVI), 234–254 (LIFL…ISLF), and 283–303 (NFAG…GLVL). The 216-residue stretch at 88–303 (LRNSFLYSII…ILGVCYGLVL (216 aa)) folds into the ABC transmembrane type-1 domain.

It belongs to the binding-protein-dependent transport system permease family. MalFG subfamily.

The protein resides in the cell membrane. Its function is as follows. Probably part of a binding-protein-dependent transport system. Probably responsible for the translocation of the substrate across the membrane. In Mycoplasma pneumoniae (strain ATCC 29342 / M129 / Subtype 1) (Mycoplasmoides pneumoniae), this protein is Probable ABC transporter permease protein MG188 homolog.